The chain runs to 250 residues: Sulfate transporter CysZ (250 aa).

4 consecutive transmembrane segments (helical) span residues 27 to 47 (FVVLPLLANIILVGGAMYYLF), 64 to 84 (FLSWLSYVLWPLLALTILATF), 150 to 170 (FLLLLIPALGQTLGPIAWFLF), and 210 to 230 (MLVAFFTSIPIVNLFIVPVAV).

Belongs to the CysZ family.

It is found in the cell inner membrane. Its function is as follows. High affinity, high specificity proton-dependent sulfate transporter, which mediates sulfate uptake. Provides the sulfur source for the cysteine synthesis pathway. The polypeptide is Sulfate transporter CysZ (Vibrio cholerae serotype O1 (strain ATCC 39541 / Classical Ogawa 395 / O395)).